A 138-amino-acid chain; its full sequence is Transcription antitermination protein NusB (138 aa).

Belongs to the NusB family.

Involved in transcription antitermination. Required for transcription of ribosomal RNA (rRNA) genes. Binds specifically to the boxA antiterminator sequence of the ribosomal RNA (rrn) operons. The protein is Transcription antitermination protein NusB of Colwellia psychrerythraea (strain 34H / ATCC BAA-681) (Vibrio psychroerythus).